A 380-amino-acid chain; its full sequence is Cytochrome b (380 aa).

A run of 4 helical transmembrane segments spans residues 34–54 (FGSL…FLAM), 78–99 (WLLR…YMHI), 114–134 (WNIG…GYVL), and 179–199 (FFAF…VHLL). 2 residues coordinate heme b: H84 and H98. Residues H183 and H197 each coordinate heme b. A ubiquinone is bound at residue H202. Transmembrane regions (helical) follow at residues 227-247 (YKDV…ALFS), 289-309 (LGGV…PFVH), 321-341 (LAQV…WLGG), and 348-368 (YIFL…LLIP).

It belongs to the cytochrome b family. In terms of assembly, the cytochrome bc1 complex contains 3 respiratory subunits (MT-CYB, CYC1 and UQCRFS1), 2 core proteins (UQCRC1 and UQCRC2) and probably 6 low-molecular weight proteins. The cofactor is heme b.

It localises to the mitochondrion inner membrane. Functionally, component of the ubiquinol-cytochrome c reductase complex (complex III or cytochrome b-c1 complex) that is part of the mitochondrial respiratory chain. The b-c1 complex mediates electron transfer from ubiquinol to cytochrome c. Contributes to the generation of a proton gradient across the mitochondrial membrane that is then used for ATP synthesis. The sequence is that of Cytochrome b (MT-CYB) from Branchiostoma floridae (Florida lancelet).